The chain runs to 285 residues: PHO85 cyclin-7 (285 aa).

Positions 1–14 (MELSSPSKKTTTSP) are enriched in low complexity. Positions 1–42 (MELSSPSKKTTTSPINIPGGNRDNLIIGPHSHSFKTDPFSSN) are disordered. At Ser69 the chain carries Phosphoserine.

Belongs to the cyclin family. PHO80 subfamily. Forms a cyclin-CDK complex with PHO85. Interacts with the substrate proteins MMR1 and YJL084C. Interacts with the CDK inhibitor (CKI) PHO81.

The protein resides in the cytoplasm. Its activity is regulated as follows. The PCL7-PHO85 cyclin-CDK is inhibited by PHO81 in low-phosphate conditions. Cyclin partner of the cyclin-dependent kinase (CDK) PHO85. Together with cyclin PCL6, controls glycogen phosphorylase and glycogen synthase activities in response to nutrient availablility. The PCL7-PHO85 cyclin-CDK holoenzyme has GLC8 kinase activity and phosphorylates and inactivates the phosphatase PP1-2 inhibitor GLC8, causing activation of PP1-2, which then dephosphorylates and activates glycogen phosphorylase. PCL7-PHO85 also phosphorylates MMR1 and YJL084C. This Saccharomyces cerevisiae (strain ATCC 204508 / S288c) (Baker's yeast) protein is PHO85 cyclin-7 (PCL7).